The sequence spans 432 residues: Homogentisate 1,2-dioxygenase (432 aa).

His-286 acts as the Proton acceptor in catalysis. His-329 and Glu-335 together coordinate Fe cation. Residues Tyr-344 and His-365 each contribute to the homogentisate site. A Fe cation-binding site is contributed by His-365.

It belongs to the homogentisate dioxygenase family. In terms of assembly, hexamer; dimer of trimers. Fe cation is required as a cofactor.

It carries out the reaction homogentisate + O2 = 4-maleylacetoacetate + H(+). It participates in amino-acid degradation; L-phenylalanine degradation; acetoacetate and fumarate from L-phenylalanine: step 4/6. In terms of biological role, involved in the catabolism of homogentisate (2,5-dihydroxyphenylacetate or 2,5-OH-PhAc), a central intermediate in the degradation of phenylalanine and tyrosine. Catalyzes the oxidative ring cleavage of the aromatic ring of homogentisate to yield maleylacetoacetate. The polypeptide is Homogentisate 1,2-dioxygenase (Bordetella pertussis (strain Tohama I / ATCC BAA-589 / NCTC 13251)).